The following is a 106-amino-acid chain: Foxo1-corepressor (106 aa).

A disordered region spans residues 1–44 (MGGPTRRHQEEGSAECLGGPSTRAAPGPGLRDFHFTTAGPSKAD). The Nuclear export signal signature appears at 78–87 (IGTLYIRLDL). Threonine 93 is modified (phosphothreonine; by PKA).

Interacts with FOXO1 (via N-terminal domain); the interaction is direct, occurs in a forskolin-independent manner that prevents SIRT1 binding to FOXO1. Interacts with FOXO3. Does not interact with FOXO4. Post-translationally, phosphorylated at Thr-93 by PKA, leading to import into the nucleus. In terms of tissue distribution, expressed in adipocytes. Expressed in brown and white adipose tissue but not in liver. Protein levels in brown and white adipose tissues decrease following fasting (at protein level). Expressed in white and brown adipose tissues. Expressed in adipocytes. Not expressed in liver, skeletal muscle and brain.

It is found in the cytoplasm. Its subcellular location is the cytosol. The protein resides in the nucleus. In terms of biological role, regulator of adipocytes that acts by repressing FOXO1 transcriptional activity. Acts by promoting acetylation of FOXO1, both by preventing the interaction between FOXO1 and SIRT1 deacetylase, and by mediating acetyltransferase activity in vitro. Regulates insulin sensitivity and energy metabolism. The protein is Foxo1-corepressor (Fcor) of Mus musculus (Mouse).